The following is a 179-amino-acid chain: Large ribosomal subunit protein uL5 (179 aa).

This sequence belongs to the universal ribosomal protein uL5 family. As to quaternary structure, part of the 50S ribosomal subunit; part of the 5S rRNA/L5/L18/L25 subcomplex. Contacts the 5S rRNA and the P site tRNA. Forms a bridge to the 30S subunit in the 70S ribosome.

Functionally, this is one of the proteins that bind and probably mediate the attachment of the 5S RNA into the large ribosomal subunit, where it forms part of the central protuberance. In the 70S ribosome it contacts protein S13 of the 30S subunit (bridge B1b), connecting the 2 subunits; this bridge is implicated in subunit movement. Contacts the P site tRNA; the 5S rRNA and some of its associated proteins might help stabilize positioning of ribosome-bound tRNAs. This is Large ribosomal subunit protein uL5 from Geotalea daltonii (strain DSM 22248 / JCM 15807 / FRC-32) (Geobacter daltonii).